A 518-amino-acid chain; its full sequence is Light-independent protochlorophyllide reductase subunit B (518 aa).

Position 36 (Asp36) interacts with [4Fe-4S] cluster. Catalysis depends on Asp285, which acts as the Proton donor. Gly420–Leu421 contacts substrate.

Belongs to the ChlB/BchB/BchZ family. As to quaternary structure, protochlorophyllide reductase is composed of three subunits; BchL, BchN and BchB. Forms a heterotetramer of two BchB and two BchN subunits. It depends on [4Fe-4S] cluster as a cofactor.

The catalysed reaction is chlorophyllide a + oxidized 2[4Fe-4S]-[ferredoxin] + 2 ADP + 2 phosphate = protochlorophyllide a + reduced 2[4Fe-4S]-[ferredoxin] + 2 ATP + 2 H2O. Its pathway is porphyrin-containing compound metabolism; bacteriochlorophyll biosynthesis (light-independent). In terms of biological role, component of the dark-operative protochlorophyllide reductase (DPOR) that uses Mg-ATP and reduced ferredoxin to reduce ring D of protochlorophyllide (Pchlide) to form chlorophyllide a (Chlide). This reaction is light-independent. The NB-protein (BchN-BchB) is the catalytic component of the complex. In Bradyrhizobium sp. (strain ORS 278), this protein is Light-independent protochlorophyllide reductase subunit B.